The chain runs to 223 residues: N-acetylmuramate alpha-1-phosphate uridylyltransferase (223 aa).

UTP is bound by residues 11 to 13 and Lys23; that span reads GER. A substrate-binding site is contributed by Asn105. Position 107 (Asp107) interacts with Mg(2+). Asp140 and Asp205 together coordinate substrate. Asp205 provides a ligand contact to Mg(2+).

Belongs to the nucleotidyltransferase MurU family. As to quaternary structure, monomer. Requires Mg(2+) as cofactor.

The catalysed reaction is N-acetyl-alpha-D-muramate 1-phosphate + UDP + H(+) = UDP-N-acetyl-alpha-D-muramate + phosphate. It participates in cell wall biogenesis; peptidoglycan recycling. Is completely inhibited by EDTA in vitro. In terms of biological role, catalyzes the formation of UDP-N-acetylmuramate (UDP-MurNAc), a crucial precursor of the bacterial peptidoglycan cell wall, from UTP and MurNAc-alpha-1P. Is involved in peptidoglycan recycling as part of a cell wall recycling pathway that bypasses de novo biosynthesis of the peptidoglycan precursor UDP-MurNAc. Plays a role in intrinsic resistance to fosfomycin, which targets the de novo synthesis of UDP-MurNAc. Is not able to use GlcNAc-alpha-1P and GalNAc-alpha-1P as substrates. Cannot accept other nucleotide triphosphates (ATP, CTP, TTP, or GTP) than UTP. This chain is N-acetylmuramate alpha-1-phosphate uridylyltransferase, found in Pseudomonas putida (strain ATCC 47054 / DSM 6125 / CFBP 8728 / NCIMB 11950 / KT2440).